The sequence spans 450 residues: tRNA modification GTPase MnmE (450 aa).

K21, E78, and K117 together coordinate (6S)-5-formyl-5,6,7,8-tetrahydrofolate. The region spanning 213–376 (GHALSIIGKP…LSQKISAFFP (164 aa)) is the TrmE-type G domain. A K(+)-binding site is contributed by N223. Residues 223 to 228 (NAGKSS), 242 to 248 (SDIKGTT), and 267 to 270 (DTAG) each bind GTP. S227 provides a ligand contact to Mg(2+). S242, I244, and T247 together coordinate K(+). T248 contacts Mg(2+). A (6S)-5-formyl-5,6,7,8-tetrahydrofolate-binding site is contributed by K450.

Belongs to the TRAFAC class TrmE-Era-EngA-EngB-Septin-like GTPase superfamily. TrmE GTPase family. In terms of assembly, homodimer. Heterotetramer of two MnmE and two MnmG subunits. The cofactor is K(+).

The protein resides in the cytoplasm. In terms of biological role, exhibits a very high intrinsic GTPase hydrolysis rate. Involved in the addition of a carboxymethylaminomethyl (cmnm) group at the wobble position (U34) of certain tRNAs, forming tRNA-cmnm(5)s(2)U34. This is tRNA modification GTPase MnmE from Helicobacter acinonychis (strain Sheeba).